The chain runs to 387 residues: Phosphoglycerate kinase (387 aa).

Substrate-binding positions include 21–23 (DLN), arginine 36, 59–62 (HLGR), arginine 113, and arginine 146. ATP-binding positions include lysine 197, glutamate 314, and 340–343 (GGDT).

Belongs to the phosphoglycerate kinase family. As to quaternary structure, monomer.

The protein localises to the cytoplasm. The enzyme catalyses (2R)-3-phosphoglycerate + ATP = (2R)-3-phospho-glyceroyl phosphate + ADP. Its pathway is carbohydrate degradation; glycolysis; pyruvate from D-glyceraldehyde 3-phosphate: step 2/5. The protein is Phosphoglycerate kinase of Pseudomonas paraeruginosa (strain DSM 24068 / PA7) (Pseudomonas aeruginosa (strain PA7)).